We begin with the raw amino-acid sequence, 213 residues long: Putative thiamine-phosphate synthase (213 aa).

4-amino-2-methyl-5-(diphosphooxymethyl)pyrimidine is bound by residues 38-42 and asparagine 70; that span reads QLREK. Aspartate 71 lines the Mg(2+) pocket. Serine 109 is a binding site for 4-amino-2-methyl-5-(diphosphooxymethyl)pyrimidine. 2-[(2R,5Z)-2-carboxy-4-methylthiazol-5(2H)-ylidene]ethyl phosphate is bound at residue 135–137; sequence TPS. Lysine 138 contacts 4-amino-2-methyl-5-(diphosphooxymethyl)pyrimidine. Residues glycine 166 and 186-187 each bind 2-[(2R,5Z)-2-carboxy-4-methylthiazol-5(2H)-ylidene]ethyl phosphate; that span reads IS.

The protein belongs to the thiamine-phosphate synthase family. Mg(2+) serves as cofactor.

The enzyme catalyses 2-[(2R,5Z)-2-carboxy-4-methylthiazol-5(2H)-ylidene]ethyl phosphate + 4-amino-2-methyl-5-(diphosphooxymethyl)pyrimidine + 2 H(+) = thiamine phosphate + CO2 + diphosphate. It carries out the reaction 2-(2-carboxy-4-methylthiazol-5-yl)ethyl phosphate + 4-amino-2-methyl-5-(diphosphooxymethyl)pyrimidine + 2 H(+) = thiamine phosphate + CO2 + diphosphate. It catalyses the reaction 4-methyl-5-(2-phosphooxyethyl)-thiazole + 4-amino-2-methyl-5-(diphosphooxymethyl)pyrimidine + H(+) = thiamine phosphate + diphosphate. Its pathway is cofactor biosynthesis; thiamine diphosphate biosynthesis; thiamine phosphate from 4-amino-2-methyl-5-diphosphomethylpyrimidine and 4-methyl-5-(2-phosphoethyl)-thiazole: step 1/1. In terms of biological role, condenses 4-methyl-5-(beta-hydroxyethyl)thiazole monophosphate (THZ-P) and 2-methyl-4-amino-5-hydroxymethyl pyrimidine pyrophosphate (HMP-PP) to form thiamine monophosphate (TMP). The sequence is that of Putative thiamine-phosphate synthase (thiE) from Geobacter sulfurreducens (strain ATCC 51573 / DSM 12127 / PCA).